The chain runs to 740 residues: Autotransporter adhesin BtaE (740 aa).

Residues 1 to 11 form the signal peptide; it reads MFGLSVNHAYA. The interval 12 to 647 is surface exposed passenger domain; sequence GPGIFINDGT…LQTLDQANAY (636 aa). The interval 648 to 686 is outer membrane translocation of the passenger domain; the sequence is TDKKFGKLNEDIVATRIEARQAAAIGLAAASLRYDDRPG. The next 4 beta stranded transmembrane spans lie at 686–696, 700–710, 719–725, and 728–739; these read GKISAAIGGGF, EGAVALGLGHT, NLSAATS, and NWGMGAGFSYTF. The interval 687–740 is translocator domain; sequence KISAAIGGGFWRGEGAVALGLGHTSEDQRMRSNLSAATSGGNWGMGAGFSYTFN.

Belongs to the autotransporter-2 (AT-2) (TC 1.B.40) family. As to quaternary structure, homotrimer.

The protein localises to the cell surface. The protein resides in the cell outer membrane. In terms of biological role, binds to hyaluronic acid and epithelial cells, and is required for full virulence in the mouse model. The sequence is that of Autotransporter adhesin BtaE from Brucella suis biovar 1 (strain 1330).